We begin with the raw amino-acid sequence, 154 residues long: Histone H2B.5 (154 aa).

Positions 1 to 25 (MAPKAEKKPAAKKVAEEEPSEKAAP) are enriched in basic and acidic residues. A disordered region spans residues 1-62 (MAPKAEKKPA…DKKGRKKAKK (62 aa)). Residues Lys7 and Lys39 each carry the N6-acetyllysine modification. Lys150 is covalently cross-linked (Glycyl lysine isopeptide (Lys-Gly) (interchain with G-Cter in ubiquitin)).

Belongs to the histone H2B family. The nucleosome is a histone octamer containing two molecules each of H2A, H2B, H3 and H4 assembled in one H3-H4 heterotetramer and two H2A-H2B heterodimers. The octamer wraps approximately 147 bp of DNA. Post-translationally, can be acetylated to form H2BK6ac and H2BK33ac. In terms of processing, monoubiquitinated to form H2BK143ub1; may give a specific tag for epigenetic transcriptional activation.

The protein resides in the nucleus. It is found in the chromosome. Functionally, core component of nucleosome. Nucleosomes wrap and compact DNA into chromatin, limiting DNA accessibility to the cellular machineries which require DNA as a template. Histones thereby play a central role in transcription regulation, DNA repair, DNA replication and chromosomal stability. DNA accessibility is regulated via a complex set of post-translational modifications of histones, also called histone code, and nucleosome remodeling. This chain is Histone H2B.5, found in Zea mays (Maize).